A 236-amino-acid chain; its full sequence is EF-hand domain-containing protein D1 (236 aa).

Residues 1 to 48 (MASEELASKLQRRLQWEEGDSGLQPAPGAAPDPEPQPQPPAWAPTARA) are disordered. Residues 28–42 (GAAPDPEPQPQPPAW) show a composition bias toward pro residues. 2 consecutive EF-hand domains span residues 87–122 (RLIK…LGAP) and 123–158 (QTHL…AAAG). The Ca(2+) site is built by Asp100, Asp104, Glu111, Asp136, Asp138, Asp140, Lys142, and Glu147.

Its subcellular location is the mitochondrion inner membrane. Acts as a calcium sensor for mitochondrial flash (mitoflash) activation, an event characterized by stochastic bursts of superoxide production. May play a role in neuronal differentiation. The polypeptide is EF-hand domain-containing protein D1 (EFHD1) (Bos taurus (Bovine)).